The following is a 3843-amino-acid chain: NBPF family member NBPF19 (3843 aa).

Positions 70–130 form a coiled coil; it reads MLRNERQFKE…RSLNEHLQAL (61 aa). Olduvai domains lie at 165 to 257, 258 to 329, 330 to 421, 424 to 479, 480 to 572, 573 to 665, 668 to 723, 724 to 816, 817 to 909, 912 to 967, 968 to 1060, 1061 to 1153, 1156 to 1211, 1212 to 1304, 1305 to 1397, 1400 to 1455, 1456 to 1548, 1549 to 1641, 1644 to 1699, 1700 to 1792, 1793 to 1885, 1888 to 1943, 1944 to 2036, 2037 to 2129, 2132 to 2187, 2188 to 2280, 2281 to 2373, 2376 to 2431, 2432 to 2524, 2525 to 2617, 2620 to 2675, 2676 to 2768, 2769 to 2861, 2864 to 2919, 2920 to 3012, 3013 to 3105, 3108 to 3163, 3164 to 3256, 3257 to 3349, 3352 to 3407, 3408 to 3500, 3501 to 3593, 3596 to 3651, 3652 to 3744, and 3745 to 3843; these read ENDN…HIIP, ENES…VDIG, RHRW…PSCP, SREL…LDVD, RIKK…RSKK, ERRR…PSCP, and ERRR…IFPQ. 2 disordered regions span residues 180–203 and 249–295; these read EKVQ…PEDS and WEDA…EGYS. Acidic residues-rich tracts occupy residues 259–268 and 279–291; these read NESDDEEEEE and ESEE…ESWD. The interval 559-597 is disordered; it reads KGKGKKRRGRRSKKERRRGRKEGEEDQNPPCPRLSRELL. A compositionally biased stretch (basic residues) spans 560 to 578; the sequence is GKGKKRRGRRSKKERRRGR. Residues 803–841 are disordered; sequence KGKGKKRRGRRSKKERRRGRKEGEEDQNPPCPRLSRELL. The span at 804-822 shows a compositional bias: basic residues; sequence GKGKKRRGRRSKKERRRGR. Positions 1047–1085 are disordered; that stretch reads KGKGKKRRGRRSKKERRRGRKEGEEDQNPPCPRLSRELL. Positions 1048–1066 are enriched in basic residues; the sequence is GKGKKRRGRRSKKERRRGR. Residues 1291 to 1329 form a disordered region; that stretch reads KGKGKKRRGRRSKKERRRGRKEGEEDQNPPCPRLSRELL. The segment covering 1292-1310 has biased composition (basic residues); it reads GKGKKRRGRRSKKERRRGR. A disordered region spans residues 1535 to 1573; the sequence is KGKGKKRRGRRSKKERRRGRKEGEEDQNPPCPRLSRELL. Positions 1536 to 1554 are enriched in basic residues; that stretch reads GKGKKRRGRRSKKERRRGR. A disordered region spans residues 1779-1817; sequence KGKGKKRRGRRSKKERRRGRKEGEEDQNPPCPRLSRELL. Over residues 1780 to 1798 the composition is skewed to basic residues; that stretch reads GKGKKRRGRRSKKERRRGR. The segment at 2023-2061 is disordered; it reads KGKGKKRRGRRSKKERRRGRKEGEEDQNPPCPRLSRELL. A compositionally biased stretch (basic residues) spans 2024-2042; it reads GKGKKRRGRRSKKERRRGR. The interval 2267-2305 is disordered; sequence KGKGKKRRGRRSKKERRRGRKEGEEDQNPPCPRLSRELL. The span at 2268–2286 shows a compositional bias: basic residues; the sequence is GKGKKRRGRRSKKERRRGR. A disordered region spans residues 2511-2549; it reads KGKGKKRRGRRSKKERRRGRKEGEEDQNPPCPRLSRELL. A compositionally biased stretch (basic residues) spans 2512–2530; the sequence is GKGKKRRGRRSKKERRRGR. Residues 2755-2793 form a disordered region; sequence KGKGKKRRGRRSKKERRRGRKEGEEDQNPPCPRLSRELL. A compositionally biased stretch (basic residues) spans 2756–2774; that stretch reads GKGKKRRGRRSKKERRRGR. Residues 2999–3037 form a disordered region; that stretch reads KGKGKKRRGRRSKKERRRGRKEGEEDQNPPCPRLSRELL. The segment covering 3000–3018 has biased composition (basic residues); sequence GKGKKRRGRRSKKERRRGR. Residues 3243–3281 form a disordered region; sequence KGKGKKRRGRRSKKERRRGRKEGEEDQNPPCPRLSRELL. Basic residues predominate over residues 3244–3262; sequence GKGKKRRGRRSKKERRRGR. A disordered region spans residues 3487–3525; the sequence is KGKGKKRRGRRSKKERRRGRKEGEEDQNPPCPRLSRELL. Residues 3488-3506 show a composition bias toward basic residues; the sequence is GKGKKRRGRRSKKERRRGR. The disordered stretch occupies residues 3731 to 3764; it reads KGKGKKRRGRRSKKERRRGRKEGEEDQNPPCPRL. A compositionally biased stretch (basic residues) spans 3732–3750; sequence GKGKKRRGRRSKKERRRGR.

It belongs to the NBPF family.

It localises to the cytoplasm. In Homo sapiens (Human), this protein is NBPF family member NBPF19.